A 399-amino-acid chain; its full sequence is Subtilisin-like protease 4 (399 aa).

The signal sequence occupies residues 1 to 19 (MVCLKTLSVFLAAFAAADA). The propeptide occupies 20–118 (RAVFKTQGHK…VEQDQVVRIS (99 aa)). Residues 38–117 (YIVVMKDGVS…YVEQDQVVRI (80 aa)) form the Inhibitor I9 domain. Residues 128–399 (SWGLGRVSHR…NRLLYNGSGQ (272 aa)) enclose the Peptidase S8 domain. Active-site charge relay system residues include Asp-160 and His-191. N-linked (GlcNAc...) asparagine glycosylation is found at Asn-252 and Asn-308. Ser-346 functions as the Charge relay system in the catalytic mechanism. N-linked (GlcNAc...) asparagine glycosylation is present at Asn-395.

This sequence belongs to the peptidase S8 family.

The protein localises to the secreted. Its function is as follows. Secreted subtilisin-like serine protease with keratinolytic activity that contributes to pathogenicity. The chain is Subtilisin-like protease 4 (SUB4) from Arthroderma benhamiae (strain ATCC MYA-4681 / CBS 112371) (Trichophyton mentagrophytes).